Here is a 137-residue protein sequence, read N- to C-terminus: ATP synthase epsilon chain (137 aa).

It belongs to the ATPase epsilon chain family. In terms of assembly, F-type ATPases have 2 components, CF(1) - the catalytic core - and CF(0) - the membrane proton channel. CF(1) has five subunits: alpha(3), beta(3), gamma(1), delta(1), epsilon(1). CF(0) has three main subunits: a, b and c.

Its subcellular location is the cell membrane. Produces ATP from ADP in the presence of a proton gradient across the membrane. The chain is ATP synthase epsilon chain from Streptococcus agalactiae serotype III (strain NEM316).